The sequence spans 365 residues: Zinc finger MYND domain-containing protein 12 (365 aa).

Positions 17, 20, 28, 31, 37, 41, 50, and 54 each coordinate Zn(2+). The segment at 17-54 (CEVCEAPAERVCAACTVTYYCGVVHQKADWDSIHEKIC) adopts an MYND-type; atypical zinc-finger fold. TPR repeat units lie at residues 172 to 205 (SLLHRNLGLLYIAKKNYEEARYHLANDIYFASCA) and 214 to 247 (SGGYFHLANIFYDLKKLDLADTLYTKVSEIWHAY).

Expressed predominantly in the testis.

It localises to the cell projection. The protein localises to the cilium. Its subcellular location is the flagellum. Functionally, required for sperm flagellum function and male fertility. This is Zinc finger MYND domain-containing protein 12 (ZMYND12) from Homo sapiens (Human).